We begin with the raw amino-acid sequence, 522 residues long: Involucrin (522 aa).

Positions methionine 1–leucine 15 are enriched in polar residues. 3 disordered regions span residues methionine 1–glutamate 126, glutamine 159–glutamine 329, and glutamine 366–leucine 496. Residues glutamate 76–histidine 91 are compositionally biased toward low complexity. Basic and acidic residues predominate over residues tryptophan 92–glutamate 126. Low complexity predominate over residues glutamine 169–glycine 181. Composition is skewed to basic and acidic residues over residues glutamine 182 to glutamine 198, lysine 214 to glycine 231, glutamine 252 to glutamate 264, lysine 274 to glutamate 290, and glutamine 305 to leucine 323. Low complexity predominate over residues glutamine 375–glutamine 389. Composition is skewed to basic and acidic residues over residues lysine 391–glutamate 401, glutamine 409–alanine 418, and lysine 431–glutamine 465. Over residues glutamine 466 to glutamine 479 the composition is skewed to low complexity.

The protein belongs to the involucrin family. Directly or indirectly cross-linked to cornifelin (CNFN). Post-translationally, substrate of transglutaminase. Specific glutamines or lysines are cross-linked to keratins, desmoplakin and to inter involucrin molecules. As to expression, keratinocytes of epidermis and other stratified squamous epithelia.

The protein resides in the cytoplasm. Its function is as follows. Part of the insoluble cornified cell envelope (CE) of stratified squamous epithelia. The chain is Involucrin (IVL) from Hylobates lar (Lar gibbon).